The primary structure comprises 443 residues: Acyl transferase 10 (443 aa).

Catalysis depends on proton acceptor residues His182 and Asp386.

This sequence belongs to the plant acyltransferase family.

Involved in the incorporation of ferulate into the cell wall. May act as arabinoxylan feruloyl transferase. May function as p-coumaroyl-CoA transferase involved in glucuronoarabinoxylan modification. This Oryza sativa subsp. japonica (Rice) protein is Acyl transferase 10.